Reading from the N-terminus, the 26-residue chain is M-lycotoxin-Ls2a (26 aa).

As to expression, expressed by the venom gland.

The protein resides in the secreted. It localises to the target cell membrane. Its function is as follows. Forms pore that permeabilize the cell membrane. Promotes efflux of calcium from synaptosomes, causes hemolysis, and dissipates voltage gradients across muscle membrane. Potently inhibits the growth of bacteria and yeast. May function both in the prey capture strategy as well as protection from infectious organisms arising from prey ingestion. In Lycosa singoriensis (Wolf spider), this protein is M-lycotoxin-Ls2a.